The primary structure comprises 101 residues: UPF0213 protein VC_A0739 (101 aa).

In terms of domain architecture, GIY-YIG spans 9-85 (SPWFVYLVRC…KALSKSQKEA (77 aa)).

It belongs to the UPF0213 family.

This Vibrio cholerae serotype O1 (strain ATCC 39315 / El Tor Inaba N16961) protein is UPF0213 protein VC_A0739.